The primary structure comprises 178 residues: UPF0098 protein PYRAB11530 (178 aa).

Residues 1–22 (MRYLVPLLVFMVLGMGCLGGGG) form the signal peptide.

It belongs to the UPF0098 family.

This is UPF0098 protein PYRAB11530 from Pyrococcus abyssi (strain GE5 / Orsay).